The following is a 268-amino-acid chain: MDWSNIIFAFSLTLFAGLATGVGGVIAVARKAPGERFLAGSLGFSVGVMLFVSFVEILPKAVEELTGVWGERGGNWAATGAFFAGIALIAVIDRLVPTAINPHEPSTVGGAVEGYERRSRMMRAGVLTAIAISIHNFPEGFATFVAGLTDPRIAIPVAVAIAIHNIPEGIAVAVPIREATGSRGKALKWATLSGLAEPAGAVVGFILLMPFLGPEAMGLSFAAVAGIMVFISLDELLPTAISSGRHHTAIYGLVGGMAVMAVSLLLFI.

8 helical membrane-spanning segments follow: residues 6 to 26 (IIFA…GGVI), 37 to 57 (FLAG…FVEI), 73 to 93 (GGNW…AVID), 126 to 146 (VLTA…TFVA), 153 to 173 (IAIP…IAVA), 189 to 209 (WATL…ILLM), 211 to 231 (FLGP…MVFI), and 248 to 268 (TAIY…LLFI). Residues Asn136 and Glu139 each contribute to the Fe(2+) site. The Zn(2+) site is built by Glu139 and His164. Asn165, Glu168, and Glu197 together coordinate Fe(2+). Glu168 lines the Zn(2+) pocket.

It belongs to the ZIP transporter (TC 2.A.5) family. ZupT subfamily.

The protein resides in the cell membrane. The catalysed reaction is Zn(2+)(in) = Zn(2+)(out). Mediates zinc uptake. May also transport other divalent cations. This is Zinc transporter ZupT from Corynebacterium efficiens (strain DSM 44549 / YS-314 / AJ 12310 / JCM 11189 / NBRC 100395).